The sequence spans 584 residues: Aspartate--tRNA(Asp/Asn) ligase (584 aa).

Residue Glu-173 participates in L-aspartate binding. The segment at 197–200 is aspartate; the sequence is QLFK. Arg-219 contributes to the L-aspartate binding site. Residues 219–221 and Gln-228 each bind ATP; that span reads RDE. His-447 is an L-aspartate binding site. Glu-477 lines the ATP pocket. L-aspartate is bound at residue Arg-484. 529 to 532 lines the ATP pocket; the sequence is GFDR.

This sequence belongs to the class-II aminoacyl-tRNA synthetase family. Type 1 subfamily. As to quaternary structure, homodimer.

The protein localises to the cytoplasm. It carries out the reaction tRNA(Asx) + L-aspartate + ATP = L-aspartyl-tRNA(Asx) + AMP + diphosphate. Its function is as follows. Aspartyl-tRNA synthetase with relaxed tRNA specificity since it is able to aspartylate not only its cognate tRNA(Asp) but also tRNA(Asn). Reaction proceeds in two steps: L-aspartate is first activated by ATP to form Asp-AMP and then transferred to the acceptor end of tRNA(Asp/Asn). The chain is Aspartate--tRNA(Asp/Asn) ligase from Campylobacter hominis (strain ATCC BAA-381 / DSM 21671 / CCUG 45161 / LMG 19568 / NCTC 13146 / CH001A).